Here is a 74-residue protein sequence, read N- to C-terminus: Small integral membrane protein 15 (74 aa).

Residues 20–40 (YGFLTTVILALTPLFLASAVL) traverse the membrane as a helical segment. A coiled-coil region spans residues 42 to 74 (WKLAKMIEAREKEQKKKQKRQENIAKAKRLKKD). Positions 55 to 66 (QKKKQKRQENIA) are enriched in basic and acidic residues. The interval 55–74 (QKKKQKRQENIAKAKRLKKD) is disordered.

The protein belongs to the SMIM15 family.

The protein localises to the membrane. This chain is Small integral membrane protein 15 (SMIM15), found in Homo sapiens (Human).